A 63-amino-acid chain; its full sequence is Large ribosomal subunit protein bL32 (63 aa).

Disordered stretches follow at residues 1-25 (MAVPARKTSKQKKRSRRGHIKLTTP) and 42-63 (VSPKGFYKGRQVANENKQQNND). Positions 7 to 20 (KTSKQKKRSRRGHI) are enriched in basic residues. Positions 54–63 (ANENKQQNND) are enriched in polar residues.

It belongs to the bacterial ribosomal protein bL32 family.

The sequence is that of Large ribosomal subunit protein bL32 from Lactobacillus johnsonii (strain CNCM I-12250 / La1 / NCC 533).